The chain runs to 239 residues: Methylthioribulose-1-phosphate dehydratase (239 aa).

Cys94 is a binding site for substrate. Residues His112 and His114 each contribute to the Zn(2+) site. Catalysis depends on Glu136, which acts as the Proton donor/acceptor. A Zn(2+)-binding site is contributed by His192.

Belongs to the aldolase class II family. MtnB subfamily. It depends on Zn(2+) as a cofactor.

The protein localises to the cytoplasm. It catalyses the reaction 5-(methylsulfanyl)-D-ribulose 1-phosphate = 5-methylsulfanyl-2,3-dioxopentyl phosphate + H2O. It participates in amino-acid biosynthesis; L-methionine biosynthesis via salvage pathway; L-methionine from S-methyl-5-thio-alpha-D-ribose 1-phosphate: step 2/6. Catalyzes the dehydration of methylthioribulose-1-phosphate (MTRu-1-P) into 2,3-diketo-5-methylthiopentyl-1-phosphate (DK-MTP-1-P). Functions in the methionine salvage pathway. May play a role in apoptosis. The chain is Methylthioribulose-1-phosphate dehydratase from Aquarana catesbeiana (American bullfrog).